A 131-amino-acid chain; its full sequence is Small ribosomal subunit protein uS11 (131 aa).

The protein belongs to the universal ribosomal protein uS11 family. As to quaternary structure, part of the 30S ribosomal subunit. Interacts with proteins S7 and S18. Binds to IF-3.

Functionally, located on the platform of the 30S subunit, it bridges several disparate RNA helices of the 16S rRNA. Forms part of the Shine-Dalgarno cleft in the 70S ribosome. This Deinococcus deserti (strain DSM 17065 / CIP 109153 / LMG 22923 / VCD115) protein is Small ribosomal subunit protein uS11.